The sequence spans 346 residues: 3 beta-hydroxysteroid dehydrogenase/Delta 5--&gt;4-isomerase (346 aa).

Residue tyrosine 147 is the Proton acceptor of the active site. Lysine 151 contacts NAD(+).

It belongs to the 3-beta-HSD family.

The enzyme catalyses a 3beta-hydroxy-Delta(5)-steroid + NAD(+) = a 3-oxo-Delta(5)-steroid + NADH + H(+). The catalysed reaction is a 3-oxo-Delta(5)-steroid = a 3-oxo-Delta(4)-steroid. Its pathway is lipid metabolism; steroid biosynthesis. Catalyzes the oxidative conversion of Delta(5)-ene-3-beta-hydroxy steroid, and the oxidative conversion of ketosteroids. The 3-beta-HSD enzymatic system plays a crucial role in the biosynthesis of all classes of hormonal steroids. During viral infection, steroid production contributes to virulence by inhibiting the host inflammatory response. This Vaccinia virus (strain Western Reserve) (VACV) protein is 3 beta-hydroxysteroid dehydrogenase/Delta 5--&gt;4-isomerase (OPG174).